The primary structure comprises 409 residues: L-cysteine:1D-myo-inositol 2-amino-2-deoxy-alpha-D-glucopyranoside ligase (409 aa).

Cysteine 43 contacts Zn(2+). L-cysteinyl-5'-AMP-binding positions include 43–46, threonine 58, and 81–83; these read CGIT and NVT. The 'HIGH' region signature appears at 45-55; the sequence is ITPYDATHMGH. The short motif at 183–188 is the 'ERGGDP' region element; it reads ERGGDP. Tryptophan 224 is a binding site for L-cysteinyl-5'-AMP. Position 228 (cysteine 228) interacts with Zn(2+). L-cysteinyl-5'-AMP is bound at residue 246-248; that stretch reads GSD. Histidine 253 lines the Zn(2+) pocket. Residue valine 280 participates in L-cysteinyl-5'-AMP binding. The short motif at 286-290 is the 'KMSKS' region element; the sequence is KMSKS.

Belongs to the class-I aminoacyl-tRNA synthetase family. MshC subfamily. In terms of assembly, monomer. Requires Zn(2+) as cofactor.

The catalysed reaction is 1D-myo-inositol 2-amino-2-deoxy-alpha-D-glucopyranoside + L-cysteine + ATP = 1D-myo-inositol 2-(L-cysteinylamino)-2-deoxy-alpha-D-glucopyranoside + AMP + diphosphate + H(+). Functionally, catalyzes the ATP-dependent condensation of GlcN-Ins and L-cysteine to form L-Cys-GlcN-Ins. This chain is L-cysteine:1D-myo-inositol 2-amino-2-deoxy-alpha-D-glucopyranoside ligase (mshC), found in Streptomyces avermitilis (strain ATCC 31267 / DSM 46492 / JCM 5070 / NBRC 14893 / NCIMB 12804 / NRRL 8165 / MA-4680).